Here is a 117-residue protein sequence, read N- to C-terminus: Appetite-regulating hormone (117 aa).

Positions 1 to 23 (MPSPGTVCSLLLLGMLWLDLAMA) are cleaved as a signal peptide. Ser-26 carries O-decanoyl serine; alternate lipidation. Residue Ser-26 is the site of O-hexanoyl serine; alternate attachment. Ser-26 carries the O-octanoyl serine; alternate lipid modification. Residues 29 to 50 (SPEHQRVQQRKESKKPPAKLQP) are disordered. A compositionally biased stretch (basic and acidic residues) spans 31–43 (EHQRVQQRKESKK). A propeptide spans 52 to 75 (ALAGWLRPEDGGQAEGAEDELEVR) (removed in mature form). A Leucine amide modification is found at Leu-98. Positions 99–117 (GKFLQDILWEEAKEAPADK) are cleaved as a propeptide — removed in mature form.

Belongs to the motilin family. O-octanoylated by GOAT/MBOAT4. O-octanoylation or O-decanoylation is essential for ghrelin activity. The O-decanoylated forms Ghrelin-27-C10 and Ghrelin-28-C10 differ in the length of the carbon backbone of the carboxylic acid bound to Ser-26. A small fraction of ghrelin, ghrelin-28-C10:1, may be modified with a singly unsaturated carboxylic acid. Also O-acetylated and O-butyrylated on Ser-26 to minor levels. In terms of processing, amidation of Leu-98 is essential for obestatin activity. Highest level in stomach. All forms are found in serum as well. Other tissues compensate for the loss of ghrelin synthesis in the stomach following gastrectomy.

It is found in the secreted. Ghrelin is the ligand for growth hormone secretagogue receptor type 1 (GHSR). Induces the release of growth hormone from the pituitary. Has an appetite-stimulating effect, induces adiposity and stimulates gastric acid secretion. Involved in growth regulation. In terms of biological role, may be the ligand for GPR39. May have an appetite-reducing effect resulting in decreased food intake. May reduce gastric emptying activity and jejunal motility. The chain is Appetite-regulating hormone (GHRL) from Homo sapiens (Human).